Here is a 517-residue protein sequence, read N- to C-terminus: MEELQGYLEKDRSWQQHFLYPLLFKEYIYIFAHDRGLNGSIFYESAEIFGYGSKYSSLLVKRSIIRMYQQNYLIYSVNDSNQNRFVGHNNFFYFHFFYSQMILEGFAVIVEIPFLLRLVSFLEEKKIPKSQNLNLRSIHSIFPFFEDKLSHLNYVSDILIPYPIHLKILVQILQFWIQDVPSLHLLRFFLHEYHNWNSLITPNNSIFLFSKENKRLFRFPYNFYVSECEFVLVFLRKQSSYLRLTSSGAFLERTHFYGKIEHLIVVVVRRNYFQKTLCFFKDPFMHYIRYQGKAILVSKGTHLLMKKWKCHLVNFWQYYFNSWSQPYRIHINQLSNCSFYFLGYLSSVLINLSAVRNQMLENSFLIDTVFKKFDTRVPVIPLIGSLSKAKFCTVSGHPISKPIWTDLSDCDIIDRFGRICRNLSHYHSGSSKKQSLYRIKYILRFSCAKTLARKHKSMVRAFLQRLGSGLLEEFFMEEEQVVSLIFPKLTSFSLHESHIERIWYLDIIRINDLVNYS.

The protein belongs to the intron maturase 2 family. MatK subfamily.

The protein localises to the plastid. It localises to the chloroplast. Functionally, usually encoded in the trnK tRNA gene intron. Probably assists in splicing its own and other chloroplast group II introns. In Caryota mitis (Burmese fishtail palm), this protein is Maturase K.